A 206-amino-acid polypeptide reads, in one-letter code: MLSFSRVVNCSRTCSRFLGLSLGTASLCAAGANIALLFPNWDVTYLMRGLIGKHAMLGSGLWGGGLMVLLAATLISMTGSFSKSAPCLQVLIALLSSGLALLGAVICFVTSGVALKDGPFCMFDVSSFNQTQAWKFGYPFKDLHNRNYLYDRSLWTSVCLEPSKAVVWHVAFFSILLCISLLQLLLVAIHLVNSILGLFCSFCEKH.

The Cytoplasmic portion of the chain corresponds to 1–16 (MLSFSRVVNCSRTCSR). A helical transmembrane segment spans residues 17–37 (FLGLSLGTASLCAAGANIALL). At 38–54 (FPNWDVTYLMRGLIGKH) the chain is on the extracellular side. A helical membrane pass occupies residues 55-75 (AMLGSGLWGGGLMVLLAATLI). Topologically, residues 76–89 (SMTGSFSKSAPCLQ) are cytoplasmic. The chain crosses the membrane as a helical span at residues 90–110 (VLIALLSSGLALLGAVICFVT). The Extracellular segment spans residues 111 to 171 (SGVALKDGPF…PSKAVVWHVA (61 aa)). N129 carries N-linked (GlcNAc...) asparagine glycosylation. Residues 172–192 (FFSILLCISLLQLLLVAIHLV) form a helical membrane-spanning segment. The segment at 182-192 (LQLLLVAIHLV) is important for homodimerization. The Cytoplasmic segment spans residues 193–206 (NSILGLFCSFCEKH).

Belongs to the L6 tetraspanin family. May form homodimers and homooligomers. Interacts with integrins ITGAV and ITGB3. Interacts with components of members of the V0 complex of vacuolar(H+)-ATPase (V-ATPase), including ATP6V0B and ATP6V0D2; this interaction inhibits V1-V0 complex assembly. In terms of tissue distribution, predominantly expressed in osteoclasts (at protein level). Also expressed in white adipose tissue, as well as in bone marrow-derived macrophages.

Its subcellular location is the lysosome membrane. The protein localises to the cytoplasm. It is found in the cytoskeleton. The protein resides in the cell projection. It localises to the filopodium. Functionally, negatively regulates vacuolar (H+)-ATPase (V-ATPase) activity by interacting with members of V-ATPase V0 complex and hence inhibiting V1-V0 assembly. Required for multinucleation during osteoclast differentiation. This Mus musculus (Mouse) protein is Transmembrane 4 L6 family member 19 (Tm4sf19).